The following is a 349-amino-acid chain: Twinfilin-2 (349 aa).

Alanine 2 is modified (N-acetylalanine). ADF-H domains are found at residues 4–139 (QTGI…KHLS) and 177–313 (GLAF…DEVH). Residue lysine 14 is modified to N6-acetyllysine. Tyrosine 309 is subject to Phosphotyrosine. The tract at residues 322–349 (AFAKPKGPGGKRGHKRLIRGPGENGEDS) is disordered. Positions 330–339 (GGKRGHKRLI) are enriched in basic residues. Position 349 is a phosphoserine (serine 349).

This sequence belongs to the actin-binding proteins ADF family. Twinfilin subfamily. In terms of assembly, interacts with G-actin; ADP-actin form and capping protein (CP). Isoform 2 interacts (via its N-terminal ADF-H domain) with G-actin (ADP-bound form) with significantly higher affinity than isoform 1. May also be able to interact with TWF1 and phosphoinositides, PI(4,5)P2. When bound to PI(4,5)P2, it is down-regulated. Interacts with MYO7A. In terms of processing, phosphorylated on both serine/threonine and tyrosine. As to expression, isoform 1 is ubiquitously expressed (at protein level). Isoform 2 expression is restricted to heart and skeletal muscle where it is the predominant form.

Its subcellular location is the cytoplasm. It is found in the cytoskeleton. The protein localises to the perinuclear region. The protein resides in the cell projection. It localises to the stereocilium. In terms of biological role, actin-binding protein involved in motile and morphological processes. Inhibits actin polymerization, likely by sequestering G-actin. By capping the barbed ends of filaments, it also regulates motility. Seems to play an important role in clathrin-mediated endocytosis and distribution of endocytic organelles. May play a role in regulating the mature length of the middle and short rows of stereocilia. This Mus musculus (Mouse) protein is Twinfilin-2 (Twf2).